The following is a 766-amino-acid chain: NADH-dependent flavin oxidoreductase iliE (766 aa).

Residues 1-13 are compositionally biased toward polar residues; sequence MSEQLGSHITTPS. Residues 1–24 form a disordered region; that stretch reads MSEQLGSHITTPSSHDDASKDKRP. A compositionally biased stretch (basic and acidic residues) spans 14 to 24; the sequence is SHDDASKDKRP. Asparagine 30 carries an N-linked (GlcNAc...) asparagine glycan. 61–64 lines the FMN pocket; the sequence is AATA. Residues asparagine 70 and asparagine 136 are each glycosylated (N-linked (GlcNAc...) asparagine). Glutamine 143 is a binding site for FMN. 224 to 227 provides a ligand contact to substrate; sequence HAGH. Residue 385-386 participates in FMN binding; sequence AR. One can recognise a J domain in the interval 551–622; sequence TPYDILAMRK…SKRSLYDTQG (72 aa). 3 N-linked (GlcNAc...) asparagine glycosylation sites follow: asparagine 634, asparagine 650, and asparagine 654. A helical transmembrane segment spans residues 675–695; sequence MYMSNGVFATLVVMMCMIGAF.

It belongs to the NADH:flavin oxidoreductase/NADH oxidase family.

It is found in the membrane. NADH-dependent flavin oxidoreductase; part of the gene cluster that mediates the biosynthesis of ilicicolin H, a 4-hydroxy-2-pyridonealkaloid that has potent and broad antifungal activities by inhibiting the mitochondrial respiration chain. The biosynthesis of ilicicolin H starts with formation of the tetramic acid by the hybrid PKS-NRPS synthetase iliA with the partnering trans-enoyl reductase iliB since iliA lacks a designated enoylreductase (ER) domain. The cytochrome P450 monooxygenase iliC then catalyzes the ring expansion of the tetramate to the acyclic 2-pyridone. The pericyclase iliD further converts the acyclic 2-pyridone into 8-epi-ilicicolin H. 8-epi-ilicicolin H might then spontaneously convert to ilicicolin H since ilicicolin H is produced in the absence of the epimerase iliE, in contrast to what was observed for the Talaromyces variabilis ilicolin H biosynthetic pathway. This chain is NADH-dependent flavin oxidoreductase iliE, found in Neonectria sp. (strain DH2).